Consider the following 191-residue polypeptide: Protein GrpE (191 aa).

Basic and acidic residues-rich tracts occupy residues 1–19 (MKDE…EPES) and 29–42 (QQGE…EKEC). The tract at residues 1-42 (MKDEHNQEHDHLSQKEPESYQKACACKEQQGEEKQEASEKEC) is disordered.

Belongs to the GrpE family. As to quaternary structure, homodimer.

Its subcellular location is the cytoplasm. Functionally, participates actively in the response to hyperosmotic and heat shock by preventing the aggregation of stress-denatured proteins, in association with DnaK and GrpE. It is the nucleotide exchange factor for DnaK and may function as a thermosensor. Unfolded proteins bind initially to DnaJ; upon interaction with the DnaJ-bound protein, DnaK hydrolyzes its bound ATP, resulting in the formation of a stable complex. GrpE releases ADP from DnaK; ATP binding to DnaK triggers the release of the substrate protein, thus completing the reaction cycle. Several rounds of ATP-dependent interactions between DnaJ, DnaK and GrpE are required for fully efficient folding. This chain is Protein GrpE, found in Helicobacter pylori (strain HPAG1).